The primary structure comprises 131 residues: Small ribosomal subunit protein uS8 (131 aa).

The protein belongs to the universal ribosomal protein uS8 family. Part of the 30S ribosomal subunit. Contacts proteins S5 and S12.

Its function is as follows. One of the primary rRNA binding proteins, it binds directly to 16S rRNA central domain where it helps coordinate assembly of the platform of the 30S subunit. This Hydrogenovibrio crunogenus (strain DSM 25203 / XCL-2) (Thiomicrospira crunogena) protein is Small ribosomal subunit protein uS8.